A 247-amino-acid chain; its full sequence is Oil body-associated protein 2B (247 aa).

The interval 1–28 (MASSDKVPVACPASSGDGKEPMGNPTKT) is disordered.

The protein belongs to the OBAP family.

The polypeptide is Oil body-associated protein 2B (Arabidopsis thaliana (Mouse-ear cress)).